The chain runs to 137 residues: Maltose regulon regulatory protein MalI (137 aa).

In terms of domain architecture, HTH lacI-type spans 6–60; sequence VTITEVAKHAGVSVTTVSMVLGNKGRISPDTIEKVNASVEALGYIRNRAAANLRS. A DNA-binding region (H-T-H motif) is located at residues 8–27; that stretch reads ITEVAKHAGVSVTTVSMVLG.

Its function is as follows. Repressor for the malX and malY genes. This Vibrio furnissii protein is Maltose regulon regulatory protein MalI (malI).